The primary structure comprises 446 residues: tRNA modification GTPase MnmE (446 aa).

Positions 24, 81, and 120 each coordinate (6S)-5-formyl-5,6,7,8-tetrahydrofolate. The region spanning G216–L368 is the TrmE-type G domain. N226 is a binding site for K(+). GTP contacts are provided by residues N226 to S231, T245 to T251, and D270 to G273. A Mg(2+)-binding site is contributed by S230. 3 residues coordinate K(+): T245, V247, and T250. T251 contacts Mg(2+). K446 is a (6S)-5-formyl-5,6,7,8-tetrahydrofolate binding site.

It belongs to the TRAFAC class TrmE-Era-EngA-EngB-Septin-like GTPase superfamily. TrmE GTPase family. Homodimer. Heterotetramer of two MnmE and two MnmG subunits. K(+) serves as cofactor.

It is found in the cytoplasm. In terms of biological role, exhibits a very high intrinsic GTPase hydrolysis rate. Involved in the addition of a carboxymethylaminomethyl (cmnm) group at the wobble position (U34) of certain tRNAs, forming tRNA-cmnm(5)s(2)U34. This Xanthomonas campestris pv. campestris (strain 8004) protein is tRNA modification GTPase MnmE.